The chain runs to 162 residues: tRNA (cytidine(34)-2'-O)-methyltransferase (162 aa).

L80, G102, L124, and S132 together coordinate S-adenosyl-L-methionine.

It belongs to the class IV-like SAM-binding methyltransferase superfamily. RNA methyltransferase TrmH family. TrmL subfamily. Homodimer.

The protein localises to the cytoplasm. The catalysed reaction is cytidine(34) in tRNA + S-adenosyl-L-methionine = 2'-O-methylcytidine(34) in tRNA + S-adenosyl-L-homocysteine + H(+). It carries out the reaction 5-carboxymethylaminomethyluridine(34) in tRNA(Leu) + S-adenosyl-L-methionine = 5-carboxymethylaminomethyl-2'-O-methyluridine(34) in tRNA(Leu) + S-adenosyl-L-homocysteine + H(+). In terms of biological role, methylates the ribose at the nucleotide 34 wobble position in the two leucyl isoacceptors tRNA(Leu)(CmAA) and tRNA(Leu)(cmnm5UmAA). Catalyzes the methyl transfer from S-adenosyl-L-methionine to the 2'-OH of the wobble nucleotide. This chain is tRNA (cytidine(34)-2'-O)-methyltransferase, found in Acidovorax sp. (strain JS42).